A 320-amino-acid polypeptide reads, in one-letter code: Glucosaminate ammonia-lyase (320 aa).

36–43 lines the FAD pocket; it reads TGMQAGGQ. A disulfide bond links Cys-136 and Cys-139. Position 285–294 (285–294) interacts with FAD; sequence DVADHVYRQA.

Belongs to the class-II pyridine nucleotide-disulfide oxidoreductase family.

The enzyme catalyses 2-amino-2-deoxy-D-gluconate = 2-dehydro-3-deoxy-D-gluconate + NH4(+). Its function is as follows. Catalyzes the conversion of 2-amino-2-deoxy-D-gluconate (GlcNA) to 2-keto-3-deoxy-D-gluconic acid (KDGA) and ammonia. This chain is Glucosaminate ammonia-lyase, found in Pseudomonas fluorescens.